A 282-amino-acid chain; its full sequence is MINAKTKVIGLIGHPVEHSFSPIMHNAAFKDKGLNYVYVAFDVLPENLKYVIDGAKALGIVGFNVTIPHKIEIMKYLDEIDKDAQLIGAVNTIKIEDGKAIGYNTDGIGARMALEEEIGRVKDKNIVIYGAGGAARAVAFELAKDNNIIIANRTVEKAEALAKEIAEKLNKKFGEEVKFSGLDVDLDGVDIIINATPIGMYPNIDVEPIVKAEKLREDMVVMDLIYNPLETVLLKEAKKVNAKTINGLGMLIYQGAVAFKIWTGVEPNIEVMKNAIIDKITK.

Shikimate-binding positions include 19-21 (SFS) and Thr66. Lys70 acts as the Proton acceptor in catalysis. Shikimate-binding residues include Asn91 and Asp106. Residues 130–134 (GAGGA), 152–157 (NRTVEK), Thr196, Met200, and Leu224 contribute to the NADP(+) site. Tyr226 contributes to the shikimate binding site. Gly247 is a binding site for NADP(+).

It belongs to the shikimate dehydrogenase family. As to quaternary structure, homodimer.

The enzyme catalyses shikimate + NADP(+) = 3-dehydroshikimate + NADPH + H(+). The protein operates within metabolic intermediate biosynthesis; chorismate biosynthesis; chorismate from D-erythrose 4-phosphate and phosphoenolpyruvate: step 4/7. In terms of biological role, involved in the biosynthesis of the chorismate, which leads to the biosynthesis of aromatic amino acids. Catalyzes the reversible NADPH linked reduction of 3-dehydroshikimate (DHSA) to yield shikimate (SA). The chain is Shikimate dehydrogenase (NADP(+)) from Methanocaldococcus jannaschii (strain ATCC 43067 / DSM 2661 / JAL-1 / JCM 10045 / NBRC 100440) (Methanococcus jannaschii).